Consider the following 787-residue polypeptide: Endonuclease MutS2 (787 aa).

329 to 336 (GPNTGGKT) contributes to the ATP binding site. Residues 712–787 (INLLGCTVDE…DAGVTIVDFK (76 aa)) enclose the Smr domain.

This sequence belongs to the DNA mismatch repair MutS family. MutS2 subfamily. As to quaternary structure, homodimer. Binds to stalled ribosomes, contacting rRNA.

Its function is as follows. Endonuclease that is involved in the suppression of homologous recombination and thus may have a key role in the control of bacterial genetic diversity. Acts as a ribosome collision sensor, splitting the ribosome into its 2 subunits. Detects stalled/collided 70S ribosomes which it binds and splits by an ATP-hydrolysis driven conformational change. Acts upstream of the ribosome quality control system (RQC), a ribosome-associated complex that mediates the extraction of incompletely synthesized nascent chains from stalled ribosomes and their subsequent degradation. Probably generates substrates for RQC. In Lachnospira eligens (strain ATCC 27750 / DSM 3376 / VPI C15-48 / C15-B4) (Eubacterium eligens), this protein is Endonuclease MutS2.